The primary structure comprises 134 residues: uncharacterized protein (134 aa).

This is an uncharacterized protein from Homo sapiens (Human).